The chain runs to 598 residues: MVVFGLDFGTTFSSVCAYVGEELYLFKQRDSAYIPTYVFLHSDTQEVAFGYDAEVLSNDLSVRGGFYRDLKRWIGCDEENYRDYLEKLKPHYKTELLKVAQSSKSTVKLDCYSGTVPQNATLPGLIATFVKALISTASEAFKCQCTGVICSVPANYNCLQRSFTESCVNLSGYPCVYMVNEPSAAALSACSRIKGATSPVLVYDFGGGTFDVSVISALNNTFVVRASGGDMNLGGRDIDKAFVEHLYNKAQLPVNYKIDISFLKESLSKKVSFLNFPVVSEQGVRVDVLVNVSELAEVAAPFVERTIKIVKEVYEKYCSSMRLEPNVKAKLLMVGGSSYLPGLLSRLSSIPFVDECLVLPDARAAVAGGCALYSACLRNDSPMLLVDCAAHNLSISSKYCESIVCVPAGSPIPFTGVRTVNMTGSNASAVYSAALFEGDFVKCRLNKRIFFGDVVLGNVGVTGSATRTVPLTLEINVSSVGTISFSLVGPTGVKKLIGGNAAYDFSSYQLGERVVADLHKHNSDKVKLIHALTYQPFQRKKLTDGDKALFLKRLTADYRREARKFSSYDDAVLNSSELLLGRIIPKILRGSRVEKLDV.

Belongs to the heat shock protein 70 family. As to quaternary structure, homomultimer. Interacts with p20. This interaction allows the docking of the latter to the virion.

It is found in the virion. The protein resides in the host cell junction. It localises to the host plasmodesma. Functionally, transports viral genome to neighboring plant cells directly through plasmosdesmata, without any budding. The movement protein allows efficient cell to cell propagation, by bypassing the host cell wall barrier. Two movement proteins, p6, Hsp70h and three structural proteins, CP, CPm, and P64 are essential for cell-cell movement. Also plays a role in virion formation. Together with CPm and p64, encapsidates the 5'-terminal portion of the viral genome. This Beta vulgaris (Sugar beet) protein is Movement protein Hsp70h.